Reading from the N-terminus, the 519-residue chain is Transmembrane protein 180 (519 aa).

Over 1–11 (MGLDWPQAWLL) the chain is Extracellular. A helical transmembrane segment spans residues 12 to 43 (GLPIAVVYGSLALFTSILHNVFLLYYVDTFVS). At 44-55 (VYKINKVSFWVG) the chain is on the cytoplasmic side. The chain crosses the membrane as a helical span at residues 56–74 (ETVFLLWNSFNDPLFGWLS). The Extracellular segment spans residues 75-100 (DRQLLSSQPRSGAGLSSRDVVLTRVR). The helical transmembrane segment at 101–118 (ALGWHGPLLALSFLAFWV) threads the bilayer. Residues 119-126 (PWAPAGLQ) lie on the Cytoplasmic side of the membrane. The chain crosses the membrane as a helical span at residues 127 to 151 (FLLCLCLYDGFLTLVDLHHHALLAD). Residues 152–155 (LALS) are Extracellular-facing. The helical transmembrane segment at 156 to 179 (SHDRTHLNFYCSLFSAAGSLSVFA) threads the bilayer. Topologically, residues 180–191 (SYAFWNKEDFSS) are cytoplasmic. Residues 192–223 (FRAFCVVLAAGSGLGFLGTTQLLKRQIEATRR) form a helical membrane-spanning segment. The Extracellular portion of the chain corresponds to 224-264 (DRGCPGLDLDGGVCEEEPPVGGEEAGNITLGQYLRQLARHQ). The N-linked (GlcNAc...) asparagine glycan is linked to Asn-250. Residues 265–292 (NFLWFVGMDLVQVFHCHFNSNFFPLFLE) traverse the membrane as a helical segment. The Cytoplasmic segment spans residues 293-305 (HLLSDHISLSTGS). A helical membrane pass occupies residues 306-325 (FLLGISYVAPHLNNLYFLPL). At 326–330 (CRRWG) the chain is on the extracellular side. A helical transmembrane segment spans residues 331–350 (VYAVVRGLFLLKLSLSLLML). Residues 351–358 (LAGPDHPG) lie on the Cytoplasmic side of the membrane. A helical membrane pass occupies residues 359-393 (LLCFFIASNRVFTEGTCKLLTLVVTDLVDEDLVLN). The Extracellular portion of the chain corresponds to 394-402 (HRKQAASAL). A helical membrane pass occupies residues 403 to 429 (LFGMVALVTKPGQTFAPLLGTWLLCFY). At 430–468 (TGHDLFQQSPMTPVGSVRPWPELPAPAPAPAQAPTLRQG) the chain is on the cytoplasmic side. A helical membrane pass occupies residues 469–487 (CFYLLVFVPITCALLQLFT). Over 488 to 519 (WSQFTLHGRRLRTVKAQRQNLAQIHTLNIKMV) the chain is Extracellular.

It localises to the cell membrane. This Mus musculus (Mouse) protein is Transmembrane protein 180.